A 409-amino-acid polypeptide reads, in one-letter code: Adenosine deaminase (409 aa).

His-65, His-67, His-207, and Asp-314 together coordinate Zn(2+).

The protein belongs to the metallo-dependent hydrolases superfamily. Zn(2+) is required as a cofactor.

It catalyses the reaction adenosine + H2O + H(+) = inosine + NH4(+). Functionally, catalyzes the deamination of adenosine into inosine. Is also able to deaminate adenine, but with considerably less efficiency. Is not active toward 6-chloroadenine. This Helicobacter pylori (strain ATCC 700392 / 26695) (Campylobacter pylori) protein is Adenosine deaminase.